The primary structure comprises 263 residues: 4-hydroxy-2-oxo-heptane-1,7-dioate aldolase (263 aa).

The active-site Proton acceptor is His45. Gln147 contributes to the substrate binding site. Glu149 lines the a divalent metal cation pocket. Substrate-binding residues include Ala174 and Asp175. Asp175 is a binding site for a divalent metal cation.

This sequence belongs to the HpcH/HpaI aldolase family. In terms of assembly, homohexamer; trimer of dimers. A divalent metal cation serves as cofactor.

The enzyme catalyses 4-hydroxy-2-oxoheptanedioate = succinate semialdehyde + pyruvate. It functions in the pathway aromatic compound metabolism; 4-hydroxyphenylacetate degradation; pyruvate and succinate semialdehyde from 4-hydroxyphenylacetate: step 7/7. Functionally, catalyzes the reversible retro-aldol cleavage of 4-hydroxy-2-ketoheptane-1,7-dioate (HKHD) to pyruvate and succinic semialdehyde. This Salmonella heidelberg (strain SL476) protein is 4-hydroxy-2-oxo-heptane-1,7-dioate aldolase.